The sequence spans 100 residues: Aspartyl/glutamyl-tRNA(Asn/Gln) amidotransferase subunit C (100 aa).

Belongs to the GatC family. Heterotrimer of A, B and C subunits.

The enzyme catalyses L-glutamyl-tRNA(Gln) + L-glutamine + ATP + H2O = L-glutaminyl-tRNA(Gln) + L-glutamate + ADP + phosphate + H(+). The catalysed reaction is L-aspartyl-tRNA(Asn) + L-glutamine + ATP + H2O = L-asparaginyl-tRNA(Asn) + L-glutamate + ADP + phosphate + 2 H(+). Allows the formation of correctly charged Asn-tRNA(Asn) or Gln-tRNA(Gln) through the transamidation of misacylated Asp-tRNA(Asn) or Glu-tRNA(Gln) in organisms which lack either or both of asparaginyl-tRNA or glutaminyl-tRNA synthetases. The reaction takes place in the presence of glutamine and ATP through an activated phospho-Asp-tRNA(Asn) or phospho-Glu-tRNA(Gln). This chain is Aspartyl/glutamyl-tRNA(Asn/Gln) amidotransferase subunit C, found in Herminiimonas arsenicoxydans.